Consider the following 150-residue polypeptide: 3-dehydroquinate dehydratase (150 aa).

Residue Tyr-26 is the Proton acceptor of the active site. Substrate-binding residues include Asn-77, His-83, and Asp-90. Catalysis depends on His-103, which acts as the Proton donor. Residues 104–105 (LS) and Arg-114 each bind substrate.

Belongs to the type-II 3-dehydroquinase family. In terms of assembly, homododecamer.

The catalysed reaction is 3-dehydroquinate = 3-dehydroshikimate + H2O. It functions in the pathway metabolic intermediate biosynthesis; chorismate biosynthesis; chorismate from D-erythrose 4-phosphate and phosphoenolpyruvate: step 3/7. Its function is as follows. Catalyzes a trans-dehydration via an enolate intermediate. The sequence is that of 3-dehydroquinate dehydratase from Histophilus somni (strain 129Pt) (Haemophilus somnus).